The sequence spans 356 residues: MSKQQAQFTNPETPGYVGFANLPNQVHRKSVRKGFEFTLMVVGESGLGKSTLINSLFLTDLYPERVVPGAADKIERTVDIEASTVEIEERGVKLRLTVVDTPGYGDAMNCVDCFKPIISYVDNQFERYLHDESGLNRRHIVDNRVHCCFYFISPFGHGLKPLDVEFMKALHNKVNIVPVIAKADTLTLRERERLKRRVLDEIEEHGIKIYQLPDAESDEDEDFKEQTRLLKASIPFTVVGSNQLIEAKGKKVRGRLYPWGVVEVENTEHNDFLKLRTMLITHMQDLQEVTQDLHYENFRSERLKKGVTSSKVEHVEVTKDQILQEKEAELRRMQEMITRMQAQMQIQGQSGDAQHL.

Residues 33–305 enclose the Septin-type G domain; it reads KGFEFTLMVV…ENFRSERLKK (273 aa). The segment at 43–50 is G1 motif; sequence GESGLGKS. Residues 43 to 50, Thr-77, Gly-103, 182 to 190, Gly-240, and Arg-255 each bind GTP; these read GESGLGKS and KADTLTLRE. Residues 100–103 are G3 motif; sequence DTPG. The tract at residues 181–184 is G4 motif; it reads AKAD. An important for dimerization region spans residues 259–269; sequence WGVVEVENTEH.

It belongs to the TRAFAC class TrmE-Era-EngA-EngB-Septin-like GTPase superfamily. Septin GTPase family. Septins polymerize into heterooligomeric protein complexes that form filaments, and associate with cellular membranes, actin filaments and microtubules. GTPase activity is required for filament formation. Can form heterooligomers with other family members and form filaments. Interacts with wdpcp.

It localises to the cytoplasm. Its subcellular location is the cytoskeleton. It is found in the spindle. The protein localises to the cleavage furrow. The protein resides in the midbody. It localises to the cell projection. Its subcellular location is the cilium membrane. In terms of biological role, filament-forming cytoskeletal GTPase. Required for normal organization of the actin cytoskeleton. Plays a role in the biogenesis of polarized columnar-shaped epithelium. Required for the progression through mitosis through regulation of chromosome congression. During anaphase, may be required for chromosome segregation and spindle elongation. Probably plays a role in ciliogenesis and collective cell movements including convergent extension during gastrulation. In cilia, required for the integrity of the diffusion barrier at the base of the primary cilium that prevents diffusion of transmembrane proteins between the cilia and plasma membranes. Controls cell shape and not polarization of cells during convergent extension. In Xenopus laevis (African clawed frog), this protein is Septin-2A (sept2-a).